The primary structure comprises 222 residues: uncharacterized protein (222 aa).

The tract at residues 142–222 is disordered; that stretch reads ARRGGCVHPP…LPDPPSAGHL (81 aa). Residues 160–169 show a composition bias toward low complexity; it reads QSRSISSRRA. Over residues 182 to 196 the composition is skewed to basic residues; the sequence is PRRRPHRHRTRPQTR.

This sequence belongs to the Rv1128c/1148c/1588c/1702c/1945/3466 family.

This is an uncharacterized protein from Mycobacterium tuberculosis (strain CDC 1551 / Oshkosh).